We begin with the raw amino-acid sequence, 82 residues long: Hepcidin (82 aa).

The first 23 residues, 1–23, serve as a signal peptide directing secretion; it reads MALSVQIRAACLLLLLLVSLTAG. A propeptide spanning residues 24-53 is cleaved from the precursor; that stretch reads SVLPSQTRQLTDLRTQDTAGATAGLTPVAQ. 4 cysteine pairs are disulfide-bonded: C64-C80, C67-C70, C68-C76, and C71-C79.

This sequence belongs to the hepcidin family. Interacts with SLC40A1; this interaction promotes SLC40A1 rapid ubiquitination.

The protein resides in the secreted. Functionally, liver-produced hormone that constitutes the main circulating regulator of iron absorption and distribution across tissues. Acts by promoting endocytosis and degradation of ferroportin/SLC40A1, leading to the retention of iron in iron-exporting cells and decreased flow of iron into plasma. Controls the major flows of iron into plasma: absorption of dietary iron in the intestine, recycling of iron by macrophages, which phagocytose old erythrocytes and other cells, and mobilization of stored iron from hepatocytes. In terms of biological role, has strong antimicrobial activity against E.coli ML35P N.cinerea and weaker against S.epidermidis, S.aureus and group b streptococcus bacteria. Active against the fungus C.albicans. No activity against P.aeruginosa. The sequence is that of Hepcidin (HAMP) from Sus scrofa (Pig).